A 324-amino-acid chain; its full sequence is Beta-ketoacyl-[acyl-carrier-protein] synthase III (324 aa).

Active-site residues include cysteine 114 and histidine 246. The ACP-binding stretch occupies residues 247–251 (QANLR). Asparagine 276 is an active-site residue.

This sequence belongs to the thiolase-like superfamily. FabH family. Homodimer.

It is found in the cytoplasm. It catalyses the reaction malonyl-[ACP] + acetyl-CoA + H(+) = 3-oxobutanoyl-[ACP] + CO2 + CoA. It participates in lipid metabolism; fatty acid biosynthesis. Its function is as follows. Catalyzes the condensation reaction of fatty acid synthesis by the addition to an acyl acceptor of two carbons from malonyl-ACP. Catalyzes the first condensation reaction which initiates fatty acid synthesis and may therefore play a role in governing the total rate of fatty acid production. Possesses both acetoacetyl-ACP synthase and acetyl transacylase activities. Its substrate specificity determines the biosynthesis of branched-chain and/or straight-chain of fatty acids. The sequence is that of Beta-ketoacyl-[acyl-carrier-protein] synthase III from Campylobacter jejuni (strain RM1221).